We begin with the raw amino-acid sequence, 245 residues long: Biosynthetic peptidoglycan transglycosylase (245 aa).

A helical membrane pass occupies residues 19 to 39 (IVYAGAVFAAAWLATQLFYFV).

The protein belongs to the glycosyltransferase 51 family.

The protein resides in the cell inner membrane. It carries out the reaction [GlcNAc-(1-&gt;4)-Mur2Ac(oyl-L-Ala-gamma-D-Glu-L-Lys-D-Ala-D-Ala)](n)-di-trans,octa-cis-undecaprenyl diphosphate + beta-D-GlcNAc-(1-&gt;4)-Mur2Ac(oyl-L-Ala-gamma-D-Glu-L-Lys-D-Ala-D-Ala)-di-trans,octa-cis-undecaprenyl diphosphate = [GlcNAc-(1-&gt;4)-Mur2Ac(oyl-L-Ala-gamma-D-Glu-L-Lys-D-Ala-D-Ala)](n+1)-di-trans,octa-cis-undecaprenyl diphosphate + di-trans,octa-cis-undecaprenyl diphosphate + H(+). It participates in cell wall biogenesis; peptidoglycan biosynthesis. Its function is as follows. Peptidoglycan polymerase that catalyzes glycan chain elongation from lipid-linked precursors. The sequence is that of Biosynthetic peptidoglycan transglycosylase from Burkholderia multivorans (strain ATCC 17616 / 249).